The following is a 382-amino-acid chain: Galactokinase (382 aa).

Substrate is bound at residue 34-37 (EHTD). 124–130 (GAGLSSS) provides a ligand contact to ATP. Mg(2+)-binding residues include Ser130 and Glu162. Asp174 functions as the Proton acceptor in the catalytic mechanism. A substrate-binding site is contributed by Tyr223.

Belongs to the GHMP kinase family. GalK subfamily.

It is found in the cytoplasm. The catalysed reaction is alpha-D-galactose + ATP = alpha-D-galactose 1-phosphate + ADP + H(+). The protein operates within carbohydrate metabolism; galactose metabolism. Catalyzes the transfer of the gamma-phosphate of ATP to D-galactose to form alpha-D-galactose-1-phosphate (Gal-1-P). The chain is Galactokinase from Shigella boydii serotype 18 (strain CDC 3083-94 / BS512).